The following is a 64-amino-acid chain: Alpha-conotoxin-like Ac1.1b (64 aa).

A signal peptide spans 1 to 21; the sequence is MGMRMMFTLFLLVVLTTTVVS. Positions 22–47 are excised as a propeptide; the sequence is FPSDSASDGRDDEAKDERSDMYKSKR. Residues 23 to 46 form a disordered region; the sequence is PSDSASDGRDDEAKDERSDMYKSK. Residues 28 to 44 show a composition bias toward basic and acidic residues; that stretch reads SDGRDDEAKDERSDMYK. 2 disulfides stabilise this stretch: cysteine 51/cysteine 56 and cysteine 52/cysteine 62. A Cysteine amide modification is found at cysteine 62.

It belongs to the conotoxin A superfamily. Expressed by the venom duct.

It localises to the secreted. Its function is as follows. Alpha-conotoxins act on postsynaptic membranes, they bind to the nicotinic acetylcholine receptors (nAChR) and thus inhibit them. This Conus achatinus (Little frog cone) protein is Alpha-conotoxin-like Ac1.1b.